A 311-amino-acid polypeptide reads, in one-letter code: Transcriptional regulatory protein MoaR1 (311 aa).

The ompR/PhoB-type DNA-binding region spans 15–117 (LNATTAGAVQ…SEPPGYRLLI (103 aa)).

It belongs to the AfsR/DnrI/RedD regulatory family.

Its function is as follows. Acts as a positive transcriptional regulator of the molybdopterin biosynthesis moa1 locus, promoting the expression of the moaA1B1C1D1 genes. The protein is Transcriptional regulatory protein MoaR1 (moaR1) of Mycobacterium bovis (strain BCG / Pasteur 1173P2).